Here is a 630-residue protein sequence, read N- to C-terminus: tRNA uridine 5-carboxymethylaminomethyl modification enzyme MnmG (630 aa).

Residues G14–G19, V126, and S181 each bind FAD. G273–F287 is an NAD(+) binding site. Q370 contacts FAD.

Belongs to the MnmG family. In terms of assembly, homodimer. Heterotetramer of two MnmE and two MnmG subunits. Requires FAD as cofactor.

The protein localises to the cytoplasm. Functionally, NAD-binding protein involved in the addition of a carboxymethylaminomethyl (cmnm) group at the wobble position (U34) of certain tRNAs, forming tRNA-cmnm(5)s(2)U34. The sequence is that of tRNA uridine 5-carboxymethylaminomethyl modification enzyme MnmG from Alkaliphilus metalliredigens (strain QYMF).